Consider the following 331-residue polypeptide: Vitamin B12 import system permease protein BtuC (331 aa).

The next 7 membrane-spanning stretches (helical) occupy residues 21 to 43 (LALL…ERWI), 63 to 85 (PRTL…MQAV), 90 to 112 (LAEP…TVLL), 116 to 138 (LLPV…FLLL), 151 to 173 (LLIG…YFST), 193 to 210 (WRHG…LWLS), and 239 to 261 (VLVL…IAFI).

It belongs to the binding-protein-dependent transport system permease family. FecCD subfamily. As to quaternary structure, the complex is composed of two ATP-binding proteins (BtuD), two transmembrane proteins (BtuC) and a solute-binding protein (BtuF).

The protein localises to the cell inner membrane. Its function is as follows. Part of the ABC transporter complex BtuCDF involved in vitamin B12 import. Involved in the translocation of the substrate across the membrane. The protein is Vitamin B12 import system permease protein BtuC of Pectobacterium atrosepticum (strain SCRI 1043 / ATCC BAA-672) (Erwinia carotovora subsp. atroseptica).